Consider the following 501-residue polypeptide: Aspartyl/glutamyl-tRNA(Asn/Gln) amidotransferase subunit B (501 aa).

It belongs to the GatB/GatE family. GatB subfamily. In terms of assembly, heterotrimer of A, B and C subunits.

It catalyses the reaction L-glutamyl-tRNA(Gln) + L-glutamine + ATP + H2O = L-glutaminyl-tRNA(Gln) + L-glutamate + ADP + phosphate + H(+). It carries out the reaction L-aspartyl-tRNA(Asn) + L-glutamine + ATP + H2O = L-asparaginyl-tRNA(Asn) + L-glutamate + ADP + phosphate + 2 H(+). Functionally, allows the formation of correctly charged Asn-tRNA(Asn) or Gln-tRNA(Gln) through the transamidation of misacylated Asp-tRNA(Asn) or Glu-tRNA(Gln) in organisms which lack either or both of asparaginyl-tRNA or glutaminyl-tRNA synthetases. The reaction takes place in the presence of glutamine and ATP through an activated phospho-Asp-tRNA(Asn) or phospho-Glu-tRNA(Gln). In Mycobacterium sp. (strain KMS), this protein is Aspartyl/glutamyl-tRNA(Asn/Gln) amidotransferase subunit B.